We begin with the raw amino-acid sequence, 346 residues long: Biotin synthase (346 aa).

The Radical SAM core domain maps to 38-256; it reads KQIQVSTLLS…IAVARIMMPT (219 aa). [4Fe-4S] cluster is bound by residues Cys53, Cys57, and Cys60. Cys97, Cys128, Cys188, and Arg260 together coordinate [2Fe-2S] cluster.

It belongs to the radical SAM superfamily. Biotin synthase family. Homodimer. The cofactor is [4Fe-4S] cluster. Requires [2Fe-2S] cluster as cofactor.

It carries out the reaction (4R,5S)-dethiobiotin + (sulfur carrier)-SH + 2 reduced [2Fe-2S]-[ferredoxin] + 2 S-adenosyl-L-methionine = (sulfur carrier)-H + biotin + 2 5'-deoxyadenosine + 2 L-methionine + 2 oxidized [2Fe-2S]-[ferredoxin]. It participates in cofactor biosynthesis; biotin biosynthesis; biotin from 7,8-diaminononanoate: step 2/2. Its function is as follows. Catalyzes the conversion of dethiobiotin (DTB) to biotin by the insertion of a sulfur atom into dethiobiotin via a radical-based mechanism. The sequence is that of Biotin synthase from Salmonella arizonae (strain ATCC BAA-731 / CDC346-86 / RSK2980).